A 392-amino-acid polypeptide reads, in one-letter code: Pectate lyase 3 (392 aa).

The first 25 residues, 1-25 (MGIKHCCYILYFTLALVTLLQPVRS), serve as a signal peptide directing secretion. N-linked (GlcNAc...) asparagine glycosylation occurs at Asn37. Cys54 and Cys71 are oxidised to a cystine. Asp194, Asp218, and Asp222 together coordinate Ca(2+). Arg270 is a catalytic residue.

Belongs to the polysaccharide lyase 1 family. Amb a subfamily. In terms of assembly, monomer. It depends on Ca(2+) as a cofactor. The N-terminus is blocked. Pollen and flowers.

It catalyses the reaction Eliminative cleavage of (1-&gt;4)-alpha-D-galacturonan to give oligosaccharides with 4-deoxy-alpha-D-galact-4-enuronosyl groups at their non-reducing ends.. Its pathway is glycan metabolism; pectin degradation; 2-dehydro-3-deoxy-D-gluconate from pectin: step 2/5. Has pectate lyase activity. The polypeptide is Pectate lyase 3 (Ambrosia artemisiifolia (Common ragweed)).